A 183-amino-acid polypeptide reads, in one-letter code: Ribose 1,5-bisphosphate phosphokinase PhnN (183 aa).

This sequence belongs to the ribose 1,5-bisphosphokinase family.

It carries out the reaction alpha-D-ribose 1,5-bisphosphate + ATP = 5-phospho-alpha-D-ribose 1-diphosphate + ADP. It functions in the pathway metabolic intermediate biosynthesis; 5-phospho-alpha-D-ribose 1-diphosphate biosynthesis; 5-phospho-alpha-D-ribose 1-diphosphate from D-ribose 5-phosphate (route II): step 3/3. Functionally, catalyzes the phosphorylation of ribose 1,5-bisphosphate to 5-phospho-D-ribosyl alpha-1-diphosphate (PRPP). The chain is Ribose 1,5-bisphosphate phosphokinase PhnN from Azotobacter vinelandii (strain DJ / ATCC BAA-1303).